The chain runs to 87 residues: Small ribosomal subunit protein bS20 (87 aa).

This sequence belongs to the bacterial ribosomal protein bS20 family.

Binds directly to 16S ribosomal RNA. This is Small ribosomal subunit protein bS20 from Parvibaculum lavamentivorans (strain DS-1 / DSM 13023 / NCIMB 13966).